A 333-amino-acid polypeptide reads, in one-letter code: Anthranilate phosphoribosyltransferase (333 aa).

5-phospho-alpha-D-ribose 1-diphosphate contacts are provided by residues glycine 81, 84–85, threonine 89, 91–94, 109–117, and alanine 121; these read GD, NIST, and KHGNRSVSS. Glycine 81 provides a ligand contact to anthranilate. Residue serine 93 coordinates Mg(2+). Asparagine 112 serves as a coordination point for anthranilate. Residue arginine 167 coordinates anthranilate. Aspartate 225 and glutamate 226 together coordinate Mg(2+).

Belongs to the anthranilate phosphoribosyltransferase family. As to quaternary structure, homodimer. Mg(2+) serves as cofactor.

The enzyme catalyses N-(5-phospho-beta-D-ribosyl)anthranilate + diphosphate = 5-phospho-alpha-D-ribose 1-diphosphate + anthranilate. It functions in the pathway amino-acid biosynthesis; L-tryptophan biosynthesis; L-tryptophan from chorismate: step 2/5. Functionally, catalyzes the transfer of the phosphoribosyl group of 5-phosphorylribose-1-pyrophosphate (PRPP) to anthranilate to yield N-(5'-phosphoribosyl)-anthranilate (PRA). This chain is Anthranilate phosphoribosyltransferase, found in Haemophilus influenzae (strain PittGG).